We begin with the raw amino-acid sequence, 115 residues long: Parathyroid hormone (115 aa).

Residues 1-25 (MMSANTVAKVMIIMLAVCLLTQTDG) form the signal peptide. The propeptide occupies 26–31 (KPVRKR). The tract at residues 51–69 (RMQWLRRKLQDMHNFVSLG) is important for receptor binding.

This sequence belongs to the parathyroid hormone family. Interacts with PTH1R (via N-terminal extracellular domain). Highly expressed in the parathyroid gland. Also expressed in the placenta, thymus and testis.

Its subcellular location is the secreted. Functionally, parathyroid hormone elevates calcium level by dissolving the salts in bone and preventing their renal excretion. Acts by binding to its receptor, PTH1R, activating G protein-coupled receptor signaling. Stimulates [1-14C]-2-deoxy-D-glucose (2DG) transport and glycogen synthesis in osteoblastic cells. In Mus musculus (Mouse), this protein is Parathyroid hormone.